Here is a 404-residue protein sequence, read N- to C-terminus: Cytochrome P450 monooxygenase avaI (404 aa).

Cys-382 is a heme binding site.

This sequence belongs to the cytochrome P450 family. The cofactor is heme.

Its pathway is secondary metabolite biosynthesis. Its function is as follows. Cytochrome P450 monooxygenase; part of the cluster that mediates the biosynthesis of a highly modified cyclo-arginine-tryptophan dipeptide (cRW). The first step of the pathway is perfornmed by the arginine-containing cyclodipeptide synthase (RCPDS) avaA that acts as the scaffold-generating enzyme and is responsible for formation of the cyclo-Arg-Trp (cRW) diketopiperazine. AvaB then acts as a multifunctional flavoenzyme that is responsible for generating the cyclo-Arg-formylkynurenine DKP, which can be deformylated by avaC. AvaB then further catalyzes an additional N-oxidation followed by cyclization and dehydration. The next step is an N-acetylation of the guanidine group catalyzed by the arginine N-acetyltransferase avaD. The roles of the additional enzymes identified within the ava cluster still have to be determined. The polypeptide is Cytochrome P450 monooxygenase avaI (Aspergillus versicolor).